The chain runs to 364 residues: DNA polymerase IV (364 aa).

The UmuC domain occupies 8-189; sequence IIHIDMDCYF…LPLTKIPGVG (182 aa). The Mg(2+) site is built by aspartate 12 and aspartate 107. Glutamate 108 is a catalytic residue.

This sequence belongs to the DNA polymerase type-Y family. As to quaternary structure, monomer. Mg(2+) serves as cofactor.

The protein resides in the cytoplasm. The enzyme catalyses DNA(n) + a 2'-deoxyribonucleoside 5'-triphosphate = DNA(n+1) + diphosphate. Its function is as follows. Poorly processive, error-prone DNA polymerase involved in untargeted mutagenesis. Copies undamaged DNA at stalled replication forks, which arise in vivo from mismatched or misaligned primer ends. These misaligned primers can be extended by PolIV. Exhibits no 3'-5' exonuclease (proofreading) activity. May be involved in translesional synthesis, in conjunction with the beta clamp from PolIII. This chain is DNA polymerase IV, found in Shewanella woodyi (strain ATCC 51908 / MS32).